Here is an 82-residue protein sequence, read N- to C-terminus: Chlorosome protein E (82 aa).

H26 is an a bacteriochlorophyll c binding site. The disordered stretch occupies residues 55–82; sequence GSSGLKGSSPKYSGYATPSKEVKSRFEK. Over residues 59–69 the composition is skewed to low complexity; it reads LKGSSPKYSGY.

This sequence belongs to the BChl C/E-binding protein family.

Its subcellular location is the chlorosome. It localises to the chlorosome envelope. Component of the photosynthetic apparatus. The light harvesting B740 complex binds bacteriochlorophyll c. In Chlorobaculum tepidum (strain ATCC 49652 / DSM 12025 / NBRC 103806 / TLS) (Chlorobium tepidum), this protein is Chlorosome protein E (csmE).